Reading from the N-terminus, the 342-residue chain is Phosphate acyltransferase (342 aa).

It belongs to the PlsX family. Homodimer. Probably interacts with PlsY.

The protein resides in the cytoplasm. It carries out the reaction a fatty acyl-[ACP] + phosphate = an acyl phosphate + holo-[ACP]. It functions in the pathway lipid metabolism; phospholipid metabolism. Its function is as follows. Catalyzes the reversible formation of acyl-phosphate (acyl-PO(4)) from acyl-[acyl-carrier-protein] (acyl-ACP). This enzyme utilizes acyl-ACP as fatty acyl donor, but not acyl-CoA. The protein is Phosphate acyltransferase of Shewanella pealeana (strain ATCC 700345 / ANG-SQ1).